The chain runs to 154 residues: UPF0756 membrane protein RBAM_026200 (154 aa).

A run of 4 helical transmembrane segments spans residues 14–34, 54–74, 87–107, and 117–137; these read AIAL…LIVI, WGVT…DIGF, WIAL…LTLL, and LVIG…GPLI.

Belongs to the UPF0756 family.

It is found in the cell membrane. This Bacillus velezensis (strain DSM 23117 / BGSC 10A6 / LMG 26770 / FZB42) (Bacillus amyloliquefaciens subsp. plantarum) protein is UPF0756 membrane protein RBAM_026200.